We begin with the raw amino-acid sequence, 434 residues long: Maintenance of mitochondrial morphology protein 1 (434 aa).

The Lumenal portion of the chain corresponds to Met-1–Gly-105. The chain crosses the membrane as a helical span at residues Leu-106–Phe-126. Residues Ser-127–Asp-434 are Cytoplasmic-facing. The SMP-LTD domain occupies Ser-194 to Pro-408. Residues Lys-415–Asp-434 are disordered.

Belongs to the MMM1 family. In terms of assembly, homodimer. Component of the ER-mitochondria encounter structure (ERMES) or MDM complex, composed of MMM1, MDM10, MDM12 and MDM34. An MMM1 homodimer associates with one molecule of MDM12 on each side in a pairwise head-to-tail manner, and the SMP-LTD domains of MMM1 and MDM12 generate a continuous hydrophobic tunnel for phospholipid trafficking.

Its subcellular location is the endoplasmic reticulum membrane. In terms of biological role, component of the ERMES/MDM complex, which serves as a molecular tether to connect the endoplasmic reticulum (ER) and mitochondria. Components of this complex are involved in the control of mitochondrial shape and protein biogenesis, and function in nonvesicular lipid trafficking between the ER and mitochondria. The MDM12-MMM1 subcomplex functions in the major beta-barrel assembly pathway that is responsible for biogenesis of all outer membrane beta-barrel proteins, and acts in a late step after the SAM complex. The MDM10-MDM12-MMM1 subcomplex further acts in the TOM40-specific pathway after the action of the MDM12-MMM1 complex. Essential for establishing and maintaining the structure of mitochondria and maintenance of mtDNA nucleoids. The chain is Maintenance of mitochondrial morphology protein 1 from Kluyveromyces lactis (strain ATCC 8585 / CBS 2359 / DSM 70799 / NBRC 1267 / NRRL Y-1140 / WM37) (Yeast).